Consider the following 113-residue polypeptide: uncharacterized protein (113 aa).

The protein to H.pylori HP0245/JHP0230.

This is an uncharacterized protein from Campylobacter jejuni subsp. jejuni serotype O:2 (strain ATCC 700819 / NCTC 11168).